The chain runs to 264 residues: Phosphonoacetaldehyde hydrolase (264 aa).

Aspartate 9 functions as the Nucleophile in the catalytic mechanism. 2 residues coordinate Mg(2+): aspartate 9 and alanine 11. Lysine 50 serves as the catalytic Schiff-base intermediate with substrate. Residue aspartate 183 participates in Mg(2+) binding.

It belongs to the HAD-like hydrolase superfamily. PhnX family. Homodimer. The cofactor is Mg(2+).

It carries out the reaction phosphonoacetaldehyde + H2O = acetaldehyde + phosphate + H(+). Functionally, involved in phosphonate degradation. This is Phosphonoacetaldehyde hydrolase from Bacillus thuringiensis (strain Al Hakam).